A 377-amino-acid polypeptide reads, in one-letter code: Nitric oxide reductase FlRd-NAD(+) reductase (377 aa).

This sequence belongs to the FAD-dependent oxidoreductase family. Requires FAD as cofactor.

The protein localises to the cytoplasm. The enzyme catalyses 2 reduced [nitric oxide reductase rubredoxin domain] + NAD(+) + H(+) = 2 oxidized [nitric oxide reductase rubredoxin domain] + NADH. Its pathway is nitrogen metabolism; nitric oxide reduction. Functionally, one of at least two accessory proteins for anaerobic nitric oxide (NO) reductase. Reduces the rubredoxin moiety of NO reductase. This Klebsiella pneumoniae (strain 342) protein is Nitric oxide reductase FlRd-NAD(+) reductase.